A 62-amino-acid chain; its full sequence is MDHSVLNVLVCPVCNSNLHYDKENQLLICKADKLAYPIRENIPVMLVEEAKKLTLEEVKKYG.

This sequence belongs to the UPF0434 family.

The polypeptide is UPF0434 protein Fphi_1862 (Francisella philomiragia subsp. philomiragia (strain ATCC 25017 / CCUG 19701 / FSC 153 / O#319-036)).